We begin with the raw amino-acid sequence, 215 residues long: Cytochrome b6 (215 aa).

The helical transmembrane segment at 32–52 (IFHCLGGITLTCFLVQVATGF) threads the bilayer. Cys35 is a heme c binding site. Heme b-binding residues include His86 and His100. 3 helical membrane passes run 90 to 110 (ASMM…TGGF), 116 to 136 (LTWV…VTGY), and 186 to 206 (LHTF…FPMI). The heme b site is built by His187 and His202.

This sequence belongs to the cytochrome b family. PetB subfamily. In terms of assembly, the 4 large subunits of the cytochrome b6-f complex are cytochrome b6, subunit IV (17 kDa polypeptide, PetD), cytochrome f and the Rieske protein, while the 4 small subunits are PetG, PetL, PetM and PetN. The complex functions as a dimer. It depends on heme b as a cofactor. Heme c serves as cofactor.

Its subcellular location is the plastid. The protein localises to the chloroplast thylakoid membrane. In terms of biological role, component of the cytochrome b6-f complex, which mediates electron transfer between photosystem II (PSII) and photosystem I (PSI), cyclic electron flow around PSI, and state transitions. This is Cytochrome b6 from Calycanthus floridus var. glaucus (Eastern sweetshrub).